The sequence spans 53 residues: Small, acid-soluble spore protein O (53 aa).

Residues 1-53 (MVRKKANHSRPGMNAAKAQGKDAGLTSQFHAEIGQEPLNQAQRQNNKKRKKNQ) are disordered.

Belongs to the SspO family.

It localises to the spore core. In Halalkalibacterium halodurans (strain ATCC BAA-125 / DSM 18197 / FERM 7344 / JCM 9153 / C-125) (Bacillus halodurans), this protein is Small, acid-soluble spore protein O.